The primary structure comprises 210 residues: Putative Dihydrofolate reductase (210 aa).

Residues Thr4–Lys184 enclose the DHFR domain.

Belongs to the dihydrofolate reductase family.

The enzyme catalyses (6S)-5,6,7,8-tetrahydrofolate + NADP(+) = 7,8-dihydrofolate + NADPH + H(+). This Human herpesvirus 8 type P (isolate GK18) (HHV-8) protein is Putative Dihydrofolate reductase (ORF2).